We begin with the raw amino-acid sequence, 521 residues long: Tetratricopeptide repeat and J domain-containing co-chaperone DNJ1 (521 aa).

Positions 1–21 (MHLNLAGLAVAATAFLATASA) are cleaved as a signal peptide. TPR repeat units follow at residues 33-66 (VSNLLTKAQTHLSRGETNEALVYYDAAIARDPTN), 67-100 (YLSLFKRATAYLSLGRTSQATEDFNKVLSLKPGF), 102-134 (GAHLQLARLRAKAGDWDAAKAQYGLAGKAPKSA), 176-209 (PHLRELRAHCRFELGDVELALSDLQHVLHMKPGD), 211-244 (SPHIVISATSFYALGDLENGIGQVKKCLQSDPDS), 315-348 (LENLIEMTCQAYTESSHKEAAKYCDESLQLNPDS), and 349-382 (FWGLLHKGKAQLKSELYDAAIATLEKAAEIRPDQ). Positions 404–473 (DYYKVLGVEN…ELRARFDRGD (70 aa)) constitute a J domain. The segment covering 464–474 (ELRARFDRGDD) has biased composition (basic and acidic residues). A disordered region spans residues 464 to 521 (ELRARFDRGDDPNSQERPNPFQGQGNPFGGGHPFMFQQGGGGGGPNIKFQFGGQPFGF). Gly residues predominate over residues 489 to 508 (NPFGGGHPFMFQQGGGGGGP). Low complexity predominate over residues 509 to 521 (NIKFQFGGQPFGF).

It is found in the endoplasmic reticulum lumen. Functionally, endoplasmic reticulum co-chaperone required for the of virulence factors such as PG1, the major endopolygalacturonase produced during the infection of tomato plants. In Fusarium oxysporum f. sp. lycopersici (strain 4287 / CBS 123668 / FGSC 9935 / NRRL 34936) (Fusarium vascular wilt of tomato), this protein is Tetratricopeptide repeat and J domain-containing co-chaperone DNJ1.